The primary structure comprises 336 residues: Ketol-acid reductoisomerase (NADP(+)) (336 aa).

In terms of domain architecture, KARI N-terminal Rossmann spans 1-181 (MNVYYDKDCN…GGGRTGIIET (181 aa)). Residues 24–27 (YGSQ), Arg47, Ser50, Ser52, and 82–85 (DEFQ) contribute to the NADP(+) site. The active site involves His107. Residue Gly133 coordinates NADP(+). The KARI C-terminal knotted domain occupies 182–327 (TFQDETETDL…GKLRSMMPWI (146 aa)). Asp190, Glu194, Glu226, and Glu230 together coordinate Mg(2+). Residue Ser251 participates in substrate binding.

This sequence belongs to the ketol-acid reductoisomerase family. Requires Mg(2+) as cofactor.

It carries out the reaction (2R)-2,3-dihydroxy-3-methylbutanoate + NADP(+) = (2S)-2-acetolactate + NADPH + H(+). The enzyme catalyses (2R,3R)-2,3-dihydroxy-3-methylpentanoate + NADP(+) = (S)-2-ethyl-2-hydroxy-3-oxobutanoate + NADPH + H(+). The protein operates within amino-acid biosynthesis; L-isoleucine biosynthesis; L-isoleucine from 2-oxobutanoate: step 2/4. It functions in the pathway amino-acid biosynthesis; L-valine biosynthesis; L-valine from pyruvate: step 2/4. In terms of biological role, involved in the biosynthesis of branched-chain amino acids (BCAA). Catalyzes an alkyl-migration followed by a ketol-acid reduction of (S)-2-acetolactate (S2AL) to yield (R)-2,3-dihydroxy-isovalerate. In the isomerase reaction, S2AL is rearranged via a Mg-dependent methyl migration to produce 3-hydroxy-3-methyl-2-ketobutyrate (HMKB). In the reductase reaction, this 2-ketoacid undergoes a metal-dependent reduction by NADPH to yield (R)-2,3-dihydroxy-isovalerate. The sequence is that of Ketol-acid reductoisomerase (NADP(+)) from Geotalea daltonii (strain DSM 22248 / JCM 15807 / FRC-32) (Geobacter daltonii).